A 159-amino-acid polypeptide reads, in one-letter code: Phosphopantetheine adenylyltransferase (159 aa).

Position 10 (Thr-10) interacts with substrate. ATP-binding positions include 10-11 and His-18; that span reads TF. Substrate contacts are provided by Lys-42, Met-74, and Arg-88. ATP contacts are provided by residues 89–91, Glu-99, and 124–130; these read GLR and WSFISSS.

It belongs to the bacterial CoaD family. Homohexamer. The cofactor is Mg(2+).

It localises to the cytoplasm. It carries out the reaction (R)-4'-phosphopantetheine + ATP + H(+) = 3'-dephospho-CoA + diphosphate. The protein operates within cofactor biosynthesis; coenzyme A biosynthesis; CoA from (R)-pantothenate: step 4/5. Reversibly transfers an adenylyl group from ATP to 4'-phosphopantetheine, yielding dephospho-CoA (dPCoA) and pyrophosphate. This is Phosphopantetheine adenylyltransferase from Shigella dysenteriae serotype 1 (strain Sd197).